The primary structure comprises 289 residues: Acetyl-coenzyme A carboxylase carboxyl transferase subunit beta (289 aa).

The CoA carboxyltransferase N-terminal domain occupies 28–289 (VMTKCPKCKK…QGGEMAVWQS (262 aa)). Residues Cys32, Cys35, Cys51, and Cys54 each coordinate Zn(2+). The C4-type zinc finger occupies 32-54 (CPKCKKIMYTKEVLKNLKVCVNC).

The protein belongs to the AccD/PCCB family. In terms of assembly, acetyl-CoA carboxylase is a heterohexamer composed of biotin carboxyl carrier protein (AccB), biotin carboxylase (AccC) and two subunits each of ACCase subunit alpha (AccA) and ACCase subunit beta (AccD). It depends on Zn(2+) as a cofactor.

The protein localises to the cytoplasm. The catalysed reaction is N(6)-carboxybiotinyl-L-lysyl-[protein] + acetyl-CoA = N(6)-biotinyl-L-lysyl-[protein] + malonyl-CoA. It functions in the pathway lipid metabolism; malonyl-CoA biosynthesis; malonyl-CoA from acetyl-CoA: step 1/1. Its function is as follows. Component of the acetyl coenzyme A carboxylase (ACC) complex. Biotin carboxylase (BC) catalyzes the carboxylation of biotin on its carrier protein (BCCP) and then the CO(2) group is transferred by the transcarboxylase to acetyl-CoA to form malonyl-CoA. This is Acetyl-coenzyme A carboxylase carboxyl transferase subunit beta from Bacillus anthracis (strain A0248).